The following is a 490-amino-acid chain: Aspartyl/glutamyl-tRNA(Asn/Gln) amidotransferase subunit B (490 aa).

This sequence belongs to the GatB/GatE family. GatB subfamily. As to quaternary structure, heterotrimer of A, B and C subunits.

The catalysed reaction is L-glutamyl-tRNA(Gln) + L-glutamine + ATP + H2O = L-glutaminyl-tRNA(Gln) + L-glutamate + ADP + phosphate + H(+). The enzyme catalyses L-aspartyl-tRNA(Asn) + L-glutamine + ATP + H2O = L-asparaginyl-tRNA(Asn) + L-glutamate + ADP + phosphate + 2 H(+). Its function is as follows. Allows the formation of correctly charged Asn-tRNA(Asn) or Gln-tRNA(Gln) through the transamidation of misacylated Asp-tRNA(Asn) or Glu-tRNA(Gln) in organisms which lack either or both of asparaginyl-tRNA or glutaminyl-tRNA synthetases. The reaction takes place in the presence of glutamine and ATP through an activated phospho-Asp-tRNA(Asn) or phospho-Glu-tRNA(Gln). The protein is Aspartyl/glutamyl-tRNA(Asn/Gln) amidotransferase subunit B of Burkholderia vietnamiensis (strain G4 / LMG 22486) (Burkholderia cepacia (strain R1808)).